Reading from the N-terminus, the 81-residue chain is Extracellular matrix regulatory protein B (81 aa).

Its function is as follows. Regulates the biosynthesis of the extracellular matrix and the biofilm formation. May act as an enhancer of biofilm gene expression. Acts in parallel to the pathway that governs SinR derepression. This is Extracellular matrix regulatory protein B from Bacillus subtilis (strain 168).